Here is a 304-residue protein sequence, read N- to C-terminus: Solute carrier family 25 member 34 (304 aa).

3 Solcar repeats span residues 4–97, 101–194, and 204–295; these read VPPA…ACQA, QQPG…AKAW, and DSWL…LRKL. 6 helical membrane passes run 7 to 27, 45 to 65, 98 to 120, 170 to 191, 206 to 226, and 278 to 301; these read AVDL…TNPL, TYPR…RADG, GLSQ…GAFV, VGGA…FASA, WLVA…VMTP, and LGPH…WGQH.

This sequence belongs to the mitochondrial carrier (TC 2.A.29) family.

The protein resides in the mitochondrion inner membrane. The catalysed reaction is a dicarboxylate(in) + sulfate(out) = a dicarboxylate(out) + sulfate(in). Putative antiporter that exchanges dicarboxylates and sulfur oxoanions across the inner membrane of mitochondria. This chain is Solute carrier family 25 member 34 (SLC25A34), found in Bos taurus (Bovine).